Reading from the N-terminus, the 171-residue chain is Thioredoxin-2 (171 aa).

One can recognise a Thioredoxin domain in the interval 41-169; that stretch reads AFNASPSTSQ…LQALISANHP (129 aa). Cysteine 95 and cysteine 98 form a disulfide bridge.

This sequence belongs to the thioredoxin family.

It localises to the cytoplasm. It is found in the vacuole. Its function is as follows. Thioredoxin involved in responses to oxidative and cell wall stresses. Plays an important role in appressorium formation on hyphal tips. TRX2 may affect invasive growth via the MST11-MST7-PMK1 pathway since it is required for the proper folding or dimerization of MAPKK MST7. This Pyricularia oryzae (strain 70-15 / ATCC MYA-4617 / FGSC 8958) (Rice blast fungus) protein is Thioredoxin-2.